The chain runs to 130 residues: Lipoprotein LpqS (130 aa).

The first 23 residues, methionine 1 to alanine 23, serve as a signal peptide directing secretion. A lipid anchor (N-palmitoyl cysteine) is attached at cysteine 24. Cysteine 24 is lipidated: S-diacylglycerol cysteine.

Its subcellular location is the cell membrane. In terms of biological role, may play an essential role in M.tuberculosis replication and survival inside the host cell. This Mycobacterium tuberculosis (strain ATCC 25618 / H37Rv) protein is Lipoprotein LpqS.